A 179-amino-acid chain; its full sequence is Adenine phosphoribosyltransferase (179 aa).

This sequence belongs to the purine/pyrimidine phosphoribosyltransferase family. Homodimer.

It is found in the cytoplasm. The catalysed reaction is AMP + diphosphate = 5-phospho-alpha-D-ribose 1-diphosphate + adenine. The protein operates within purine metabolism; AMP biosynthesis via salvage pathway; AMP from adenine: step 1/1. Catalyzes a salvage reaction resulting in the formation of AMP, that is energically less costly than de novo synthesis. This chain is Adenine phosphoribosyltransferase, found in Azorhizobium caulinodans (strain ATCC 43989 / DSM 5975 / JCM 20966 / LMG 6465 / NBRC 14845 / NCIMB 13405 / ORS 571).